The primary structure comprises 339 residues: MTRTKYQQLQPEERMRIEIWKAEDVSLRAMARRLGRAPSTLMRELRRNATARGGYGAMSAQACRTQRLKASRPVAKLAPDGVLWGVVRHFLDQKWSPQEISATLKRAFPDQPDLNVSHETIYNAIYAYPRGELRRQLIACLRQARTKRLPRSRGTDRRGQIPDMVSIHVRPPEVNDRLMPGHWEGDLIKGAGNQSAVGVLVERMSRAVLLVKMPDATAASALAGFTGKLQSLVAPLRQTLTYDQGREMARHAELSAATGVRVYFCDPHSPWQRGTCENTNGLLRQYLPKGTDLSVYSQEELDAIADSLNGRPRKTLNWHSPLQVLAQVLANPTDRLPVQ.

In terms of domain architecture, Integrase catalytic spans 176–329 (DRLMPGHWEG…SPLQVLAQVL (154 aa)).

Belongs to the transposase IS30 family.

Its function is as follows. Required for the transposition of the insertion element. The chain is Transposase for insertion sequence element IS1086 (IS1086) from Cupriavidus metallidurans (strain ATCC 43123 / DSM 2839 / NBRC 102507 / CH34) (Ralstonia metallidurans).